The primary structure comprises 325 residues: Cytosolic Fe-S cluster assembly factor Nubp1 homolog (325 aa).

The segment at 1-26 is disordered; sequence MSSGADVPSDAPAHCPGTQSDDAGKA. Residues cysteine 15, cysteine 29, cysteine 32, and cysteine 38 each coordinate [4Fe-4S] cluster. 68–75 serves as a coordination point for ATP; that stretch reads GKGGVGKS. [4Fe-4S] cluster-binding residues include cysteine 243 and cysteine 246.

The protein belongs to the Mrp/NBP35 ATP-binding proteins family. NUBP1/NBP35 subfamily. As to quaternary structure, heterotetramer of 2 Nubp1 and 2 Nubp2 chains. Requires [4Fe-4S] cluster as cofactor.

It is found in the cytoplasm. Component of the cytosolic iron-sulfur (Fe/S) protein assembly (CIA) machinery. Required for maturation of extramitochondrial Fe-S proteins. The Nubp1-Nubp2 heterotetramer forms a Fe-S scaffold complex, mediating the de novo assembly of an Fe-S cluster and its transfer to target apoproteins. The polypeptide is Cytosolic Fe-S cluster assembly factor Nubp1 homolog (Anopheles gambiae (African malaria mosquito)).